Reading from the N-terminus, the 500-residue chain is ATP synthase subunit alpha (500 aa).

Position 169–176 (Gly169–Thr176) interacts with ATP.

It belongs to the ATPase alpha/beta chains family. F-type ATPases have 2 components, CF(1) - the catalytic core - and CF(0) - the membrane proton channel. CF(1) has five subunits: alpha(3), beta(3), gamma(1), delta(1), epsilon(1). CF(0) has three main subunits: a(1), b(2) and c(9-12). The alpha and beta chains form an alternating ring which encloses part of the gamma chain. CF(1) is attached to CF(0) by a central stalk formed by the gamma and epsilon chains, while a peripheral stalk is formed by the delta and b chains.

The protein resides in the cell membrane. The catalysed reaction is ATP + H2O + 4 H(+)(in) = ADP + phosphate + 5 H(+)(out). Functionally, produces ATP from ADP in the presence of a proton gradient across the membrane. The alpha chain is a regulatory subunit. The chain is ATP synthase subunit alpha from Clostridioides difficile (strain 630) (Peptoclostridium difficile).